Consider the following 228-residue polypeptide: Endonuclease V (228 aa).

Asp36 and Asp104 together coordinate Mg(2+).

Belongs to the endonuclease V family. Mg(2+) is required as a cofactor.

The protein resides in the cytoplasm. The enzyme catalyses Endonucleolytic cleavage at apurinic or apyrimidinic sites to products with a 5'-phosphate.. In terms of biological role, DNA repair enzyme involved in the repair of deaminated bases. Selectively cleaves double-stranded DNA at the second phosphodiester bond 3' to a deoxyinosine leaving behind the intact lesion on the nicked DNA. The chain is Endonuclease V from Serratia proteamaculans (strain 568).